The following is a 677-amino-acid chain: Regulator of G-protein signaling 9 (677 aa).

The region spanning 30 to 105 (PETGVRMQNQ…PDSSLYRFQT (76 aa)) is the DEP domain. The G protein gamma domain maps to 219–280 (VTAVRKEIMY…ITDDTQFWDL (62 aa)). The 122-residue stretch at 295-416 (RWAFNFSELI…SPIYKEMLAK (122 aa)) folds into the RGS domain. Disordered regions lie at residues 530–571 (SSGL…RAPL) and 639–677 (DSGP…GKAG).

Heterodimer with GNB5. Interacts with RGS7BP, leading to regulate the subcellular location of the heterodimer formed with GNB5. Component of the RGS9-1-Gbeta5 complex composed of RGS9 (RGS9-1), Gbeta5 (GNB5) and RGS9BP. Interacts with PDE6G and GNAT1. In terms of tissue distribution, expressed in the central nervous system. Isoform RGS9L is found in striatum, hypothalamus and nucleus accumbens while isoform RGS9S is expressed in retina and pineal gland.

The protein localises to the membrane. Functionally, inhibits signal transduction by increasing the GTPase activity of G protein alpha subunits thereby driving them into their inactive GDP-bound form. Binds to GNAT1. Involved in phototransduction; key element in the recovery phase of visual transduction. The sequence is that of Regulator of G-protein signaling 9 (Rgs9) from Rattus norvegicus (Rat).